Reading from the N-terminus, the 147-residue chain is Hemoglobin subunit gamma-2 (147 aa).

A Globin domain is found at 3–147 (HFTEEDKATI…VASALSSRYH (145 aa)). The residue at position 13 (Thr13) is a Phosphothreonine. A phosphoserine mark is found at Ser45, Ser51, and Ser53. Position 60 is an N6-acetyllysine (Lys60). His64 contributes to the heme b binding site. Lys83 is subject to N6-acetyllysine. Residue His93 participates in heme b binding. S-nitrosocysteine is present on Cys94. Phosphoserine occurs at positions 140, 143, and 144.

Belongs to the globin family. As to quaternary structure, heterotetramer of two alpha chains and two gamma chains in fetal hemoglobin (Hb F). In terms of tissue distribution, red blood cells.

In terms of biological role, gamma chains make up the fetal hemoglobin F, in combination with alpha chains. In Gorilla gorilla gorilla (Western lowland gorilla), this protein is Hemoglobin subunit gamma-2 (HBG2).